Here is a 176-residue protein sequence, read N- to C-terminus: Ribosome rescue factor SmrB (176 aa).

Positions 93 to 168 constitute a Smr domain; it reads LDLHGYRQSE…GDAALLVLID (76 aa).

Belongs to the SmrB family. Associates with collided ribosomes, but not with correctly translating polysomes.

Acts as a ribosome collision sensor. Detects stalled/collided disomes (pairs of ribosomes where the leading ribosome is stalled and a second ribosome has collided with it) and endonucleolytically cleaves mRNA at the 5' boundary of the stalled ribosome. Stalled/collided disomes form a new interface (primarily via the 30S subunits) that binds SmrB. Cleaved mRNA becomes available for tmRNA ligation, leading to ribosomal subunit dissociation and rescue of stalled ribosomes. The polypeptide is Ribosome rescue factor SmrB (Shewanella oneidensis (strain ATCC 700550 / JCM 31522 / CIP 106686 / LMG 19005 / NCIMB 14063 / MR-1)).